Here is a 192-residue protein sequence, read N- to C-terminus: 7-methyl-GTP pyrophosphatase (192 aa).

The active-site Proton acceptor is Asp69.

This sequence belongs to the Maf family. YceF subfamily. The cofactor is a divalent metal cation.

The protein resides in the cytoplasm. It carries out the reaction N(7)-methyl-GTP + H2O = N(7)-methyl-GMP + diphosphate + H(+). Functionally, nucleoside triphosphate pyrophosphatase that hydrolyzes 7-methyl-GTP (m(7)GTP). May have a dual role in cell division arrest and in preventing the incorporation of modified nucleotides into cellular nucleic acids. The polypeptide is 7-methyl-GTP pyrophosphatase (Methylobacillus flagellatus (strain ATCC 51484 / DSM 6875 / VKM B-1610 / KT)).